The primary structure comprises 450 residues: Glucose-6-phosphate isomerase (450 aa).

Residue Glu-291 is the Proton donor of the active site. Residues His-312 and Lys-426 contribute to the active site.

The protein belongs to the GPI family.

The protein localises to the cytoplasm. It catalyses the reaction alpha-D-glucose 6-phosphate = beta-D-fructose 6-phosphate. Its pathway is carbohydrate biosynthesis; gluconeogenesis. The protein operates within carbohydrate degradation; glycolysis; D-glyceraldehyde 3-phosphate and glycerone phosphate from D-glucose: step 2/4. Catalyzes the reversible isomerization of glucose-6-phosphate to fructose-6-phosphate. This Clostridium novyi (strain NT) protein is Glucose-6-phosphate isomerase.